Consider the following 264-residue polypeptide: Small ribosomal subunit protein uS2 (264 aa).

Belongs to the universal ribosomal protein uS2 family.

The sequence is that of Small ribosomal subunit protein uS2 (rpsB) from Helicobacter pylori (strain ATCC 700392 / 26695) (Campylobacter pylori).